Reading from the N-terminus, the 143-residue chain is Ribosome-binding factor A (143 aa).

The interval 123–143 (DNSLQENYKDSDKETKVEKLR) is disordered.

This sequence belongs to the RbfA family. In terms of assembly, monomer. Binds 30S ribosomal subunits, but not 50S ribosomal subunits or 70S ribosomes.

The protein resides in the cytoplasm. One of several proteins that assist in the late maturation steps of the functional core of the 30S ribosomal subunit. Associates with free 30S ribosomal subunits (but not with 30S subunits that are part of 70S ribosomes or polysomes). Required for efficient processing of 16S rRNA. May interact with the 5'-terminal helix region of 16S rRNA. This is Ribosome-binding factor A from Francisella philomiragia subsp. philomiragia (strain ATCC 25017 / CCUG 19701 / FSC 153 / O#319-036).